Reading from the N-terminus, the 96-residue chain is Mitochondrial import inner membrane translocase subunit Tim13-B (96 aa).

The Twin CX3C motif signature appears at 47-70 (CFRKCIGKPGGSLDNSEQKCVAMC). Disulfide bonds link Cys47/Cys70 and Cys51/Cys66.

This sequence belongs to the small Tim family. Heterohexamer; composed of 3 copies of TIMM8 (TIMM8A or TIMM8B) and 3 copies of TIMM13, named soluble 70 kDa complex. Associates with the TIM22 complex, whose core is composed of TIMM22.

Its subcellular location is the mitochondrion inner membrane. Its function is as follows. Mitochondrial intermembrane chaperone that participates in the import and insertion of some multi-pass transmembrane proteins into the mitochondrial inner membrane. Also required for the transfer of beta-barrel precursors from the TOM complex to the sorting and assembly machinery (SAM complex) of the outer membrane. Acts as a chaperone-like protein that protects the hydrophobic precursors from aggregation and guide them through the mitochondrial intermembrane space. The TIMM8-TIMM13 complex mediates the import of some proteins while the predominant TIMM9-TIMM10 70 kDa complex mediates the import of much more proteins. This Xenopus laevis (African clawed frog) protein is Mitochondrial import inner membrane translocase subunit Tim13-B (timm13-b).